A 160-amino-acid chain; its full sequence is Ubiquitin-conjugating enzyme E2 16 (160 aa).

Residues 3–153 (SSIKRLHKEY…VRCTTYLYAK (151 aa)) form the UBC core domain. The Glycyl thioester intermediate role is filled by cysteine 90.

It belongs to the ubiquitin-conjugating enzyme family.

The enzyme catalyses S-ubiquitinyl-[E1 ubiquitin-activating enzyme]-L-cysteine + [E2 ubiquitin-conjugating enzyme]-L-cysteine = [E1 ubiquitin-activating enzyme]-L-cysteine + S-ubiquitinyl-[E2 ubiquitin-conjugating enzyme]-L-cysteine.. The protein operates within protein modification; protein ubiquitination. In terms of biological role, catalyzes the covalent attachment of ubiquitin to other proteins. The sequence is that of Ubiquitin-conjugating enzyme E2 16 (ubc16) from Schizosaccharomyces pombe (strain 972 / ATCC 24843) (Fission yeast).